The primary structure comprises 1344 residues: Centrosomal P4.1-associated protein (1344 aa).

Disordered regions lie at residues 67–123 (SSEE…NNDL) and 187–225 (PGTL…ASNV). Over residues 211–225 (SYSNPTQENSCASNV) the composition is skewed to polar residues. Residue S248 is modified to Phosphoserine. Residues 257-300 (QEAHVKRNDLKEESPAHPSGEGALPRWEKKMGRSQEGKDVNLQK) are disordered. Basic and acidic residues-rich tracts occupy residues 259–271 (AHVK…EESP) and 282–297 (RWEK…KDVN). A Phosphoserine modification is found at S304. The tract at residues 307 to 382 (VVNIDERPIK…FTNAKSKFQK (76 aa)) is alpha/beta-tubulin binding. Disordered regions lie at residues 347–407 (QEAE…DRQH) and 425–470 (TVKK…KKRD). Residues 388 to 398 (LASTQSPSEDQ) are compositionally biased toward polar residues. Position 528 is a phosphoserine (S528). 2 positions are modified to phosphoserine; by PLK2: S577 and S583. Disordered stretches follow at residues 600-626 (RLSS…SNCS) and 672-735 (TSEI…DTGA). The span at 709 to 720 (VGDRVFSNREDS) shows a compositional bias: basic and acidic residues. S748 bears the Phosphoserine mark. Positions 887–1344 (QPPEFMVCFI…DGNVLMDTEM (458 aa)) are interaction with STIL. Residues 1105 to 1133 (QGNLSRRIKSAPPRDLGSSDKGQAALPRE) are disordered.

The protein belongs to the TCP10 family. In terms of assembly, forms homodimers. Associates with microtubules plus ends; binds to beta-tubulin subunits exposed on microtubule outer surface at its distal tip; also associates with microtubule lattice. Associated with the gamma-tubulin complex. Interacts with the head domain of EPB41. Interacts with LYST. Interacts with CEP152 (via C-terminus). Interacts with STIL. Forms a complex with STIL and SASS6. In terms of processing, phosphorylation at Ser-577 and Ser-583 by PLK2 is required for procentriole formation and centriole elongation. Phosphorylation by PLK2 oscillates during the cell cycle: it increases at G1/S transition and decreases during the exit from mitosis. Phosphorylation at Ser-583 is also mediated by PLK4 but is not a critical step in PLK4 function in procentriole assembly.

The protein resides in the cytoplasm. The protein localises to the cytoskeleton. It localises to the microtubule organizing center. It is found in the centrosome. Its subcellular location is the centriole. In terms of biological role, plays an important role in cell division and centrosome function by participating in centriole duplication. Inhibits microtubule nucleation from the centrosome. Involved in the regulation of slow processive growth of centriolar microtubules. Acts as microtubule plus-end tracking protein that stabilizes centriolar microtubules and inhibits microtubule polymerization and extension from the distal ends of centrioles. Required for centriole elongation and for STIL-mediated centriole amplification. Required for the recruitment of CEP295 to the proximal end of new-born centrioles at the centriolar microtubule wall during early S phase in a PLK4-dependent manner. May be involved in the control of centriolar-microtubule growth by acting as a regulator of tubulin release. The chain is Centrosomal P4.1-associated protein (Cpap) from Mus musculus (Mouse).